Here is a 289-residue protein sequence, read N- to C-terminus: tRNA pseudouridine synthase B (289 aa).

The Nucleophile role is filled by D38.

This sequence belongs to the pseudouridine synthase TruB family. Type 1 subfamily.

It catalyses the reaction uridine(55) in tRNA = pseudouridine(55) in tRNA. Functionally, responsible for synthesis of pseudouridine from uracil-55 in the psi GC loop of transfer RNAs. In Acaryochloris marina (strain MBIC 11017), this protein is tRNA pseudouridine synthase B.